Here is a 345-residue protein sequence, read N- to C-terminus: MTSRHLAITMGDPAGIGPEIIVKACLGLKGRIATGDLRLLIIGSGAALDGAKAALGTDVAIPQVSADDREWPNLCYLQADAEGDPIKPGVLSADGGRFAYKAIEQGVRLTQAGRTAAIVTAPLNKEALNKAGYHFPGHTEMLAHLTGVRGSVMLLAHGNMRVSHVSTHVALEDVPKRLTPERLRMVIDLTNDALRRLGIAKPKIAVAALNPHAGEGGLFGRQDIDVSAPTIAKAVADGLDVIGPVPGDTIFVKLRAGQFDAAVAMYHDQGHIPVKLLGFQVDPATGRWQELSGVNITLGLPIIRTSVDHGTAFDIAGKGIANEHSLIEAIDYAERLAAGASASKS.

2 residues coordinate substrate: histidine 138 and threonine 139. A divalent metal cation is bound by residues histidine 168, histidine 212, and histidine 267. The substrate site is built by lysine 275, asparagine 295, and arginine 304.

This sequence belongs to the PdxA family. PdxA2 subfamily. In terms of assembly, homodimer. The cofactor is a divalent metal cation.

The catalysed reaction is 4-O-phospho-D-threonate + NAD(+) = dihydroxyacetone phosphate + CO2 + NADH. Its function is as follows. Catalyzes the NAD-dependent oxidation and subsequent decarboxylation of D-threonate 4-phosphate to produce dihydroxyacetone phosphate (DHAP). The chain is Putative D-threonate 4-phosphate dehydrogenase (pdxA2) from Bradyrhizobium diazoefficiens (strain JCM 10833 / BCRC 13528 / IAM 13628 / NBRC 14792 / USDA 110).